The primary structure comprises 339 residues: Neutrophil cytosol factor 4 (339 aa).

Residues 19–140 enclose the PX domain; that stretch reads DVAVSANIAD…IFFYQSAYDA (122 aa). A 1,2-diacyl-sn-glycero-3-phospho-(1D-myo-inositol-3-phosphate) contacts are provided by residues 58-60 and 92-94; these read RYR and KVY. Position 154 is a phosphothreonine (Thr-154). The region spanning 170–229 is the SH3 domain; the sequence is MEAPRAEALFDFTGNSKLELSFKAGDVIFLLSKINKDWLEGTSQGATGIFPGSFVKILKD. In terms of domain architecture, PB1 spans 237–329; the sequence is TNWLRCYFYE…FPWKLHVTQK (93 aa). Ser-315 bears the Phosphoserine mark.

Component of the phagocyte NADPH oxidase complex composed of an obligatory core heterodimer formed by the membrane proteins CYBA and CYBB and the cytosolic regulatory subunits NCF1/p47-phox, NCF2/p67-phox, NCF4/p40-phox and the small GTPase RAC1 or RAC2. Part of a cytosolic complex composed at least by NCF1, NCF2 and NCF4. Interacts with NCF2. Interacts with NCF1. The NCF2-NCF4 complex interacts with GBP7 (via GB1/RHD3-type G domain).

The protein localises to the cytoplasm. Its subcellular location is the cytosol. It localises to the endosome membrane. It is found in the membrane. Its function is as follows. Subunit of the phagocyte NADPH oxidase complex that mediates the transfer of electrons from cytosolic NADPH to O2 to produce the superoxide anion (O2(-)). In the activated complex, electrons are first transferred from NADPH to flavin adenine dinucleotide (FAD) and subsequently transferred via two heme molecules to molecular oxygen, producing superoxide through an outer-sphere reaction. Activation of the NADPH oxidase complex is initiated by the assembly of cytosolic subunits of the NADPH oxidase complex with the core NADPH oxidase complex to form a complex at the plasma membrane or phagosomal membrane. This activation process is initiated by phosphorylation dependent binding of the cytosolic NCF1/p47-phox subunit to the C-terminus of CYBA/p22-phox. This Mus musculus (Mouse) protein is Neutrophil cytosol factor 4.